Reading from the N-terminus, the 317-residue chain is Transaldolase (317 aa).

Lys126 (schiff-base intermediate with substrate) is an active-site residue.

This sequence belongs to the transaldolase family. Type 1 subfamily. In terms of assembly, homodimer.

The protein resides in the cytoplasm. The enzyme catalyses D-sedoheptulose 7-phosphate + D-glyceraldehyde 3-phosphate = D-erythrose 4-phosphate + beta-D-fructose 6-phosphate. It functions in the pathway carbohydrate degradation; pentose phosphate pathway; D-glyceraldehyde 3-phosphate and beta-D-fructose 6-phosphate from D-ribose 5-phosphate and D-xylulose 5-phosphate (non-oxidative stage): step 2/3. In terms of biological role, transaldolase is important for the balance of metabolites in the pentose-phosphate pathway. This Burkholderia vietnamiensis (strain G4 / LMG 22486) (Burkholderia cepacia (strain R1808)) protein is Transaldolase.